A 173-amino-acid polypeptide reads, in one-letter code: Nucleoside-triphosphatase THEP1 (173 aa).

ATP contacts are provided by residues 15-22 and 101-108; these read GMPGVGKT and LKIIDEIG.

This sequence belongs to the THEP1 NTPase family.

The enzyme catalyses a ribonucleoside 5'-triphosphate + H2O = a ribonucleoside 5'-diphosphate + phosphate + H(+). Its function is as follows. Has nucleotide phosphatase activity towards ATP, GTP, CTP, TTP and UTP. May hydrolyze nucleoside diphosphates with lower efficiency. The chain is Nucleoside-triphosphatase THEP1 from Pyrobaculum aerophilum (strain ATCC 51768 / DSM 7523 / JCM 9630 / CIP 104966 / NBRC 100827 / IM2).